Consider the following 629-residue polypeptide: Protein EDS1B (629 aa).

Catalysis depends on S123, which acts as the Nucleophile. Active-site charge relay system residues include D187 and H317.

Interacts (via N-terminus) with PAD4 and SAG101. Part of a nuclear complex made of EDS1, PAD4 and SAG101, that can be redirected to the cytoplasm in the presence of an extranuclear form of EDS1. Does not interact with itself or with EDS1.

It is found in the nucleus. The protein localises to the cytoplasm. Acts as a second functional copy of EDS1. Can mediate HRT-mediated resistance to turnip crinkle virus. The chain is Protein EDS1B (EDS1B) from Arabidopsis thaliana (Mouse-ear cress).